The sequence spans 377 residues: Ribosomal RNA large subunit methyltransferase G (377 aa).

Belongs to the methyltransferase superfamily. RlmG family.

The protein resides in the cytoplasm. The catalysed reaction is guanosine(1835) in 23S rRNA + S-adenosyl-L-methionine = N(2)-methylguanosine(1835) in 23S rRNA + S-adenosyl-L-homocysteine + H(+). Functionally, specifically methylates the guanine in position 1835 (m2G1835) of 23S rRNA. In Aeromonas salmonicida (strain A449), this protein is Ribosomal RNA large subunit methyltransferase G.